The sequence spans 59 residues: Ferredoxin (59 aa).

4Fe-4S ferredoxin-type domains follow at residues 2–30 (GKITIVNIDDCVACGACSGTCPQSVLEVN) and 31–59 (DHVEIKNPDDCIGCGACVDACPQGVLKVE). Positions 12, 15, 18, 22, 41, 44, 47, and 51 each coordinate [4Fe-4S] cluster.

Requires [4Fe-4S] cluster as cofactor.

Ferredoxins are iron-sulfur proteins that transfer electrons in a wide variety of metabolic reactions. In Entamoeba histolytica (strain ATCC 30459 / HM-1:IMSS / ABRM), this protein is Ferredoxin.